Consider the following 122-residue polypeptide: UPF0102 protein CTC_01256 (122 aa).

The protein belongs to the UPF0102 family.

The protein is UPF0102 protein CTC_01256 of Clostridium tetani (strain Massachusetts / E88).